Here is a 499-residue protein sequence, read N- to C-terminus: UDP-N-acetylmuramoyl-L-alanyl-D-glutamate--2,6-diaminopimelate ligase (499 aa).

Residue Ser-32 coordinates UDP-N-acetyl-alpha-D-muramoyl-L-alanyl-D-glutamate. 117 to 123 (GTNGKTT) contacts ATP. UDP-N-acetyl-alpha-D-muramoyl-L-alanyl-D-glutamate-binding positions include 159 to 160 (TT), Ser-186, Gln-192, and Arg-194. Position 226 is an N6-carboxylysine (Lys-226). Meso-2,6-diaminopimelate-binding positions include Arg-394, 418-421 (DNPR), Gly-469, and Glu-473. The Meso-diaminopimelate recognition motif motif lies at 418 to 421 (DNPR).

Belongs to the MurCDEF family. MurE subfamily. It depends on Mg(2+) as a cofactor. In terms of processing, carboxylation is probably crucial for Mg(2+) binding and, consequently, for the gamma-phosphate positioning of ATP.

The protein resides in the cytoplasm. The enzyme catalyses UDP-N-acetyl-alpha-D-muramoyl-L-alanyl-D-glutamate + meso-2,6-diaminopimelate + ATP = UDP-N-acetyl-alpha-D-muramoyl-L-alanyl-gamma-D-glutamyl-meso-2,6-diaminopimelate + ADP + phosphate + H(+). The protein operates within cell wall biogenesis; peptidoglycan biosynthesis. Functionally, catalyzes the addition of meso-diaminopimelic acid to the nucleotide precursor UDP-N-acetylmuramoyl-L-alanyl-D-glutamate (UMAG) in the biosynthesis of bacterial cell-wall peptidoglycan. This chain is UDP-N-acetylmuramoyl-L-alanyl-D-glutamate--2,6-diaminopimelate ligase, found in Synechococcus sp. (strain WH7803).